Here is a 149-residue protein sequence, read N- to C-terminus: Large ribosomal subunit protein bL9 (149 aa).

Belongs to the bacterial ribosomal protein bL9 family.

Its function is as follows. Binds to the 23S rRNA. The protein is Large ribosomal subunit protein bL9 of Bacillus pumilus (strain SAFR-032).